We begin with the raw amino-acid sequence, 358 residues long: PDZ and LIM domain protein 3 (358 aa).

The PDZ domain occupies Met1 to Glu84. Disordered regions lie at residues Phe126–Thr155 and Asp237–Val274. A compositionally biased stretch (low complexity) spans Pro129–Gly146. Residues Pro288 to Pro347 form the LIM zinc-binding domain.

The protein resides in the cytoplasm. Its subcellular location is the myofibril. It localises to the sarcomere. The protein localises to the z line. May play a role in the organization of actin filament arrays within muscle cells. The chain is PDZ and LIM domain protein 3 (pdlim3) from Xenopus laevis (African clawed frog).